Here is a 369-residue protein sequence, read N- to C-terminus: tRNA 2-selenouridine synthase (369 aa).

Residues 12 to 136 enclose the Rhodanese domain; the sequence is FLDDIPLMDV…LRNFLFETTR (125 aa). C95 acts as the S-selanylcysteine intermediate in catalysis.

It belongs to the SelU family. In terms of assembly, monomer.

The enzyme catalyses 5-methylaminomethyl-2-thiouridine(34) in tRNA + selenophosphate + (2E)-geranyl diphosphate + H2O + H(+) = 5-methylaminomethyl-2-selenouridine(34) in tRNA + (2E)-thiogeraniol + phosphate + diphosphate. It catalyses the reaction 5-methylaminomethyl-2-thiouridine(34) in tRNA + (2E)-geranyl diphosphate = 5-methylaminomethyl-S-(2E)-geranyl-thiouridine(34) in tRNA + diphosphate. It carries out the reaction 5-methylaminomethyl-S-(2E)-geranyl-thiouridine(34) in tRNA + selenophosphate + H(+) = 5-methylaminomethyl-2-(Se-phospho)selenouridine(34) in tRNA + (2E)-thiogeraniol. The catalysed reaction is 5-methylaminomethyl-2-(Se-phospho)selenouridine(34) in tRNA + H2O = 5-methylaminomethyl-2-selenouridine(34) in tRNA + phosphate. Functionally, involved in the post-transcriptional modification of the uridine at the wobble position (U34) of tRNA(Lys), tRNA(Glu) and tRNA(Gln). Catalyzes the conversion of 2-thiouridine (S2U-RNA) to 2-selenouridine (Se2U-RNA). Acts in a two-step process involving geranylation of 2-thiouridine (S2U) to S-geranyl-2-thiouridine (geS2U) and subsequent selenation of the latter derivative to 2-selenouridine (Se2U) in the tRNA chain. This chain is tRNA 2-selenouridine synthase, found in Pseudomonas aeruginosa (strain ATCC 15692 / DSM 22644 / CIP 104116 / JCM 14847 / LMG 12228 / 1C / PRS 101 / PAO1).